We begin with the raw amino-acid sequence, 275 residues long: Ribosomal RNA small subunit methyltransferase A (275 aa).

Asn20, Leu22, Gly47, Glu68, Asp90, and Asn110 together coordinate S-adenosyl-L-methionine.

The protein belongs to the class I-like SAM-binding methyltransferase superfamily. rRNA adenine N(6)-methyltransferase family. RsmA subfamily.

Its subcellular location is the cytoplasm. It carries out the reaction adenosine(1518)/adenosine(1519) in 16S rRNA + 4 S-adenosyl-L-methionine = N(6)-dimethyladenosine(1518)/N(6)-dimethyladenosine(1519) in 16S rRNA + 4 S-adenosyl-L-homocysteine + 4 H(+). Its function is as follows. Specifically dimethylates two adjacent adenosines (A1518 and A1519) in the loop of a conserved hairpin near the 3'-end of 16S rRNA in the 30S particle. May play a critical role in biogenesis of 30S subunits. The protein is Ribosomal RNA small subunit methyltransferase A of Chlorobaculum tepidum (strain ATCC 49652 / DSM 12025 / NBRC 103806 / TLS) (Chlorobium tepidum).